The sequence spans 181 residues: Ribosome-recycling factor (181 aa).

The protein belongs to the RRF family.

The protein localises to the cytoplasm. Responsible for the release of ribosomes from messenger RNA at the termination of protein biosynthesis. May increase the efficiency of translation by recycling ribosomes from one round of translation to another. This chain is Ribosome-recycling factor, found in Tropheryma whipplei (strain TW08/27) (Whipple's bacillus).